A 395-amino-acid chain; its full sequence is Transcription termination/antitermination protein NusA (395 aa).

Residues 137–201 (NSVLMGQVIL…TKKGLLLELS (65 aa)) enclose the S1 motif domain. KH domains lie at 243 to 291 (SHNS…TLAL) and 331 to 378 (KVRL…NENE).

It belongs to the NusA family. In terms of assembly, monomer. Binds directly to the core enzyme of the DNA-dependent RNA polymerase and to nascent RNA.

It localises to the cytoplasm. In terms of biological role, participates in both transcription termination and antitermination. This chain is Transcription termination/antitermination protein NusA, found in Helicobacter pylori (strain J99 / ATCC 700824) (Campylobacter pylori J99).